The sequence spans 153 residues: ORM1-like protein 3 (153 aa).

Positions M1 to M17 are important for ceramide level-sensing. At M1–G21 the chain is on the cytoplasmic side. A run of 2 helical transmembrane segments spans residues I22–S44 and V45–F63. The Cytoplasmic portion of the chain corresponds to L64–K100. The chain crosses the membrane as a helical span at residues F101–T117. Topologically, residues K118–Q121 are lumenal. Residues I122–L139 traverse the membrane as a helical segment. P137 carries the post-translational modification Hydroxyproline. The Cytoplasmic segment spans residues P140–Y153.

Belongs to the ORM family. As to quaternary structure, ceramide-sensitive subunit of the serine palmitoyltransferase (SPT) complex, which is also composed of SPTLC1, SPTLC2/3 and SPTSSA/B. In terms of processing, when hydroxylated at Pro-137, ubiquitinated via 'Lys-48'-linkage, leading to proteasomal degradation. In endothelial cells, ORMDL3 proteasomal degradation is controlled by the sphingosine 1-phosphate receptor signaling pathway. Widely expressed. Expressed in adult and fetal heart, brain, lung, liver, skeletal muscle and kidney. Expressed in adult pancreas and placenta and in fetal spleen and thymus.

The protein resides in the endoplasmic reticulum membrane. Its function is as follows. Plays an essential role in the homeostatic regulation of sphingolipid de novo biosynthesis by modulating the activity of the serine palmitoyltransferase (SPT) in response to ceramide levels. When complexed to SPT, the binding of ceramides to its N-terminus stabilizes a conformation that block SPT substrate entry, hence preventing SPT catalytic activity. Through this mechanism, maintains ceramide levels at sufficient concentrations for the production of complex sphingolipids, but which prevents the accumulation of ceramides to levels that trigger apoptosis. This chain is ORM1-like protein 3 (ORMDL3), found in Homo sapiens (Human).